The following is a 414-amino-acid chain: MSTKQVTCRYFLHGVCREGSRCLFSHDLTTSKPSTICKYYQRGACAYGDRCRYDHIKPPGRGSGAPADHSNRSSSSAGASAPGPGPPANTSKHLKKPLVLRDKALCSDSRPRVFSAESSELNECWEQRDDGAQKPHSYLEAIRSGLDASAAAAATAGTFPELQQTSPQICPFLAAGQCQYGESCPYLHGEMCEICRQHVLHPHDPEQRAAHEKKCMVAFEMDMERAFAVQQSQDKVCKICLDVVYEKSSPSERRFGILSSCAHTYCLNCIRQWRCVEQLHNQIRKSCPECRVVSEFVIPSIYWVEDQEQKNLLIEEFKSGVSKKACKYFDQGRGTCPFGGKCFYMHAYADGRRAEPDKPRKQLSAEGNVRFQNSVRLWDFIEEREHRSVPQLEDEVNDLGELFMQLSGASDAPH.

2 C3H1-type zinc fingers span residues 2-29 (STKQ…HDLT) and 31-58 (SKPS…HIKP). Positions 57 to 94 (KPPGRGSGAPADHSNRSSSSAGASAPGPGPPANTSKHL) are disordered. Positions 73–82 (SSSSAGASAP) are enriched in low complexity. The C3H1-type 3 zinc finger occupies 164–191 (QTSPQICPFLAAGQCQYGESCPYLHGEM). A makorin-type Cys-His region spans residues 192–221 (CEICRQHVLHPHDPEQRAAHEKKCMVAFEM). An RING-type zinc finger spans residues 237–291 (CKICLDVVYEKSSPSERRFGILSSCAHTYCLNCIRQWRCVEQLHNQIRKSCPECR). A C3H1-type 4 zinc finger spans residues 320-349 (GVSKKACKYFDQGRGTCPFGGKCFYMHAYA).

It localises to the cytoplasm. The protein resides in the nucleus. It carries out the reaction S-ubiquitinyl-[E2 ubiquitin-conjugating enzyme]-L-cysteine + [acceptor protein]-L-lysine = [E2 ubiquitin-conjugating enzyme]-L-cysteine + N(6)-ubiquitinyl-[acceptor protein]-L-lysine.. The protein operates within protein modification; protein ubiquitination. Its function is as follows. E3 ubiquitin ligase catalyzing the covalent attachment of ubiquitin moieties onto substrate proteins. Inhibits neurogenesis and axis formation during embryonic development by modulating the phosphatidylinositol 3-kinase (PI3K) pathway. Acts downstream of PI3K and akt1 to up-regulate gsk3b mRNA expression. This is E3 ubiquitin-protein ligase makorin-2 (mkrn2) from Danio rerio (Zebrafish).